The sequence spans 232 residues: MEFTKALIKGKLIKRYKRFFADVKIGKEIVTAHCPNTGSMKGLLDEGNMVYVSKNDDPKRKLKYTLEIIKVKKNLVGVNTHFANKIAFHGLVNNLVKEVANNDSIKAEVFFDKETRFDFLVEKNKQKIFVEVKNVTLFREEKTAEFPDAVTTRGSKHLKTLIEAVKKGYKSYLLFLVQIEGVDNFKIAKDIDKEYYENYLLAKKAGVNFLAYQCKINSKEIKIDKKIKIINA.

It belongs to the SfsA family.

The chain is Sugar fermentation stimulation protein homolog from Pelagibacter ubique (strain HTCC1062).